Consider the following 438-residue polypeptide: Thymidine phosphorylase (438 aa).

It belongs to the thymidine/pyrimidine-nucleoside phosphorylase family. Homodimer.

It carries out the reaction thymidine + phosphate = 2-deoxy-alpha-D-ribose 1-phosphate + thymine. It functions in the pathway pyrimidine metabolism; dTMP biosynthesis via salvage pathway; dTMP from thymine: step 1/2. Functionally, the enzymes which catalyze the reversible phosphorolysis of pyrimidine nucleosides are involved in the degradation of these compounds and in their utilization as carbon and energy sources, or in the rescue of pyrimidine bases for nucleotide synthesis. This is Thymidine phosphorylase from Burkholderia orbicola (strain MC0-3).